The chain runs to 302 residues: MNPLELKKAVGSGLLSFPVTHFDNDLKFDEAKYRRHVEWLSGYDAAALFAAGGTGEFFSLNPAEVPQVVQAAKAVAGNTPIISGTGYGTSIAVEIAKSAEKAGADGLLLLPPYLMFAEQEGLIAHVKAVCQSVGIGVIVYNRDNAILNADSIARLTDECPNLIGFKDGVGDVDKVIEITTKLQDRLVYVGGMPTHEVYAQAYFAAGVTTYSSAVFNFVPALAQRFYGALRTGDQATVDEILKGFFFPFVALRNRKKGYAVSIIKAGLRVLGQDPGPVRPPLTDLTPEELAALAQIIETAKAA.

The protein belongs to the DapA family.

The catalysed reaction is 5-dehydro-4-deoxy-D-glucarate + H(+) = 2,5-dioxopentanoate + CO2 + H2O. It functions in the pathway carbohydrate acid metabolism; D-glucarate degradation; 2,5-dioxopentanoate from D-glucarate: step 2/2. In Rhizobium rhizogenes (strain K84 / ATCC BAA-868) (Agrobacterium radiobacter), this protein is Probable 5-dehydro-4-deoxyglucarate dehydratase.